A 188-amino-acid chain; its full sequence is Phosphoheptose isomerase (188 aa).

The region spanning 33–188 is the SIS domain; that stretch reads VTASLRAGGK…CGLVEDALCS (156 aa). Residue 48 to 50 participates in substrate binding; that stretch reads NGG. Residues H57 and E61 each contribute to the Zn(2+) site. Substrate contacts are provided by residues E61, 90–91, 116–118, S121, and Q168; these read ND and STS. The Zn(2+) site is built by Q168 and H176.

It belongs to the SIS family. GmhA subfamily. In terms of assembly, homotetramer. Zn(2+) serves as cofactor.

It localises to the cytoplasm. The enzyme catalyses 2 D-sedoheptulose 7-phosphate = D-glycero-alpha-D-manno-heptose 7-phosphate + D-glycero-beta-D-manno-heptose 7-phosphate. It functions in the pathway carbohydrate biosynthesis; D-glycero-D-manno-heptose 7-phosphate biosynthesis; D-glycero-alpha-D-manno-heptose 7-phosphate and D-glycero-beta-D-manno-heptose 7-phosphate from sedoheptulose 7-phosphate: step 1/1. Its function is as follows. Catalyzes the isomerization of sedoheptulose 7-phosphate in D-glycero-D-manno-heptose 7-phosphate. The protein is Phosphoheptose isomerase of Rhodospirillum rubrum (strain ATCC 11170 / ATH 1.1.1 / DSM 467 / LMG 4362 / NCIMB 8255 / S1).